The following is a 383-amino-acid chain: Aurachin C monooxygenase/isomerase (383 aa).

FAD is bound by residues Gly15, Ser47, Val128, Asp285, and 295–299 (GQGGC).

Requires FAD as cofactor.

The catalysed reaction is aurachin C + NADH + O2 + H(+) = 4-hydroxy-2-methyl-3-oxo-4-[(2E,6E)-farnesyl]-3,4-dihydroquinoline 1-oxide + NAD(+) + H2O. It catalyses the reaction aurachin C + NADPH + O2 + H(+) = 4-hydroxy-2-methyl-3-oxo-4-[(2E,6E)-farnesyl]-3,4-dihydroquinoline 1-oxide + NADP(+) + H2O. The enzyme catalyses aurachin C + NADH + O2 + H(+) = aurachin C epoxide + NAD(+) + H2O. It carries out the reaction aurachin C + NADPH + O2 + H(+) = aurachin C epoxide + NADP(+) + H2O. The catalysed reaction is aurachin C epoxide = 2-hydroxy-1a-methyl-7a-[(2E,6E)-farnesyl]-1a,2-dihydrooxireno[2,3-b]quinolin-7(7aH)-one. It catalyses the reaction 2-hydroxy-1a-methyl-7a-[(2E,6E)-farnesyl]-1a,2-dihydrooxireno[2,3-b]quinolin-7(7aH)-one = 4-hydroxy-2-methyl-3-oxo-4-[(2E,6E)-farnesyl]-3,4-dihydroquinoline 1-oxide. In terms of biological role, catalyzes the initial step in the conversion of aurachin C to aurachin B. Catalyzes the epoxidation of the C(2)-C(3) double bond of aurachin C, which is followed by a semipinacol rearrangement, causing migration of the farnesyl group from C(3) to C(4). Accepts both NADH and NADPH, but has a preference for NADH. The sequence is that of Aurachin C monooxygenase/isomerase from Stigmatella aurantiaca.